The primary structure comprises 250 residues: Ribonuclease PH (250 aa).

Phosphate contacts are provided by residues R87 and 125–127 (GTR).

This sequence belongs to the RNase PH family. In terms of assembly, homohexameric ring arranged as a trimer of dimers.

The enzyme catalyses tRNA(n+1) + phosphate = tRNA(n) + a ribonucleoside 5'-diphosphate. Functionally, phosphorolytic 3'-5' exoribonuclease that plays an important role in tRNA 3'-end maturation. Removes nucleotide residues following the 3'-CCA terminus of tRNAs; can also add nucleotides to the ends of RNA molecules by using nucleoside diphosphates as substrates, but this may not be physiologically important. Probably plays a role in initiation of 16S rRNA degradation (leading to ribosome degradation) during starvation. The sequence is that of Ribonuclease PH from Moorella thermoacetica (strain ATCC 39073 / JCM 9320).